Here is a 461-residue protein sequence, read N- to C-terminus: Argininosuccinate lyase (461 aa).

This sequence belongs to the lyase 1 family. Argininosuccinate lyase subfamily.

The protein localises to the cytoplasm. It catalyses the reaction 2-(N(omega)-L-arginino)succinate = fumarate + L-arginine. The protein operates within amino-acid biosynthesis; L-arginine biosynthesis; L-arginine from L-ornithine and carbamoyl phosphate: step 3/3. The protein is Argininosuccinate lyase of Shewanella piezotolerans (strain WP3 / JCM 13877).